We begin with the raw amino-acid sequence, 1280 residues long: Rho guanine nucleotide exchange factor 10-like protein (1280 aa).

The span at 1-10 (MASSNPPPQP) shows a compositional bias: pro residues. Positions 1-94 (MASSNPPPQP…TEAPTVVSNG (94 aa)) are disordered. Over residues 26–46 (EVEEDSGEAFEFDDSDEEEDT) the composition is skewed to acidic residues. Position 40 is a phosphoserine (S40). Low complexity predominate over residues 78 to 89 (PAAAPPQTEAPT). Phosphotyrosine is present on residues Y131 and Y152. Positions 161–202 (PRETEDLGWSSSEFESYSEDSGEETKPEAEPTKHRGSFQPKL) are disordered. Residues 183 to 193 (EETKPEAEPTK) are compositionally biased toward basic and acidic residues. S279 is modified (phosphoserine). The region spanning 314-501 (VRRHILGSIV…ETLAEKLNEQ (188 aa)) is the DH domain. 2 disordered regions span residues 1133 to 1163 (QEEA…HTAR) and 1186 to 1207 (PLLS…SEED).

Interacts with RHOA, RHOB and RHOC.

The protein resides in the cytoplasm. Its function is as follows. Acts as a guanine nucleotide exchange factor (GEF) for RHOA, RHOB and RHOC. This Mus musculus (Mouse) protein is Rho guanine nucleotide exchange factor 10-like protein (Arhgef10l).